The primary structure comprises 101 residues: Integration host factor subunit beta (101 aa).

The interval 62–84 (RNPKTGESVALPGKHVPHFKPGK) is disordered.

It belongs to the bacterial histone-like protein family. As to quaternary structure, heterodimer of an alpha and a beta chain.

Its function is as follows. This protein is one of the two subunits of integration host factor, a specific DNA-binding protein that functions in genetic recombination as well as in transcriptional and translational control. In Stenotrophomonas maltophilia (strain K279a), this protein is Integration host factor subunit beta.